Here is an 86-residue protein sequence, read N- to C-terminus: Late effector protein 1 (86 aa).

The N-terminal stretch at 1–24 (MRSHQMAAFFAVSLMMMVVLGALS) is a signal peptide.

Belongs to the lep1 family. Interacts at the cell wall with secreted rep1 repellent peptides.

Its subcellular location is the secreted. The protein localises to the cell wall. Core effector contributing to spore formation and tumor formation at the host plant. Modulates surface hydrophobicity promoting cell-cell or cell-surface contacts. Lep1 and rep1 interact in aerial hyphae to form a strong hydrophobic layer. Plays a crucial role in hyphal aggregation that might be a prerequisite for strong proliferation of diploid cells and for induction of the morphological changes associated with spore formation. This Mycosarcoma maydis (Corn smut fungus) protein is Late effector protein 1.